The primary structure comprises 122 residues: Acidic phospholipase A2 1 (122 aa).

Intrachain disulfides connect C26-C115, C28-C44, C43-C94, C49-C122, C50-C87, C57-C81, and C75-C85. 3 residues coordinate Ca(2+): Y27, G29, and G31. H47 is an active-site residue. D48 serves as a coordination point for Ca(2+). D88 is a catalytic residue.

It belongs to the phospholipase A2 family. Group II subfamily. D49 sub-subfamily. As to quaternary structure, homodimer. The cofactor is Ca(2+). As to expression, expressed by the venom gland.

Its subcellular location is the secreted. It catalyses the reaction a 1,2-diacyl-sn-glycero-3-phosphocholine + H2O = a 1-acyl-sn-glycero-3-phosphocholine + a fatty acid + H(+). Functionally, PLA2 catalyzes the calcium-dependent hydrolysis of the 2-acyl groups in 3-sn-phosphoglycerides. The polypeptide is Acidic phospholipase A2 1 (Protobothrops mucrosquamatus (Taiwan habu)).